A 313-amino-acid chain; its full sequence is D-beta-D-heptose 7-phosphate kinase (313 aa).

Asparagine 196–glutamate 199 provides a ligand contact to ATP. Aspartate 264 is an active-site residue.

The catalysed reaction is D-glycero-beta-D-manno-heptose 7-phosphate + ATP = D-glycero-beta-D-manno-heptose 1,7-bisphosphate + ADP + H(+). The protein operates within nucleotide-sugar biosynthesis; ADP-L-glycero-beta-D-manno-heptose biosynthesis; ADP-L-glycero-beta-D-manno-heptose from D-glycero-beta-D-manno-heptose 7-phosphate: step 1/4. Its pathway is bacterial outer membrane biogenesis; LPS core biosynthesis. Catalyzes the phosphorylation of D-glycero-D-manno-heptose 7-phosphate at the C-1 position to selectively form D-glycero-beta-D-manno-heptose-1,7-bisphosphate. The protein is D-beta-D-heptose 7-phosphate kinase (rfaE) of Bordetella bronchiseptica (strain ATCC BAA-588 / NCTC 13252 / RB50) (Alcaligenes bronchisepticus).